The chain runs to 145 residues: Aminoglycoside N(6')-acetyltransferase type 1 (145 aa).

An N-acetyltransferase domain is found at 1 to 145 (MDIRQMNKTH…ERVIFYRKRC (145 aa)). 4 residues coordinate substrate: Trp22, His25, Tyr66, and Glu79. Residues 81–83 (IFV) and 89–94 (QRGVAK) contribute to the acetyl-CoA site. Position 115 (Asp115) interacts with substrate. Residue Asn120 participates in acetyl-CoA binding. Glu136 contacts substrate.

In terms of assembly, homodimer.

It catalyses the reaction kanamycin B + acetyl-CoA = N(6')-acetylkanamycin B + CoA + H(+). Functionally, catalyzes the transfer of an acetyl group from acetyl-CoA to the 6'-amino group of aminoglycoside molecules conferring resistance to antibiotics containing the purpurosamine ring including amikacin, tobramycin, dibekacin and ribostamycin. Able to acetylate eukaryotic histone proteins. The protein is Aminoglycoside N(6')-acetyltransferase type 1 of Salmonella enteritidis.